Here is a 1113-residue protein sequence, read N- to C-terminus: Histone deacetylase 5 (1113 aa).

The tract at residues 1 to 22 (MNSPNESDGMSGREPSLGILPR) is disordered. Lys35 is covalently cross-linked (Glycyl lysine isopeptide (Lys-Gly) (interchain with G-Cter in SUMO2)). Disordered regions lie at residues 39–63 (PGAM…RGAL) and 187–272 (KEPT…SSPL). Residues 238-249 (DSRDDFPLRKTA) show a composition bias toward basic and acidic residues. Ser250 bears the Phosphoserine; by AMPK, CaMK1, SIK1 and PKD/PRKD1 mark. Basic and acidic residues predominate over residues 263-272 (KVAERRSSPL). Thr283 carries the phosphothreonine; by PKC modification. A disordered region spans residues 472-494 (RTVGKLPRHRPLSRTQSSPLPQS). Positions 484 to 494 (SRTQSSPLPQS) are enriched in low complexity. Ser488 bears the Phosphoserine; by AMPK, CaMK1, SIK1 and PKD/PRKD1 mark. Lys523 is modified (N6-acetyllysine). The tract at residues 526–611 (TKTGELSRQP…PDEGPDLEES (86 aa)) is disordered. Over residues 571-610 (STQEDLEEEEEEEEEEEEDCIQVKDEDGESGPDEGPDLEE) the composition is skewed to acidic residues. 2 positions are modified to phosphoserine: Ser600 and Ser650. Residues 675-1019 (GVVYDTFMLK…VSALLSVELQ (345 aa)) are histone deacetylase. Zn(2+)-binding residues include Cys687, Cys689, His695, and Cys772. The active site involves His824. The short motif at 1072–1113 (EEAETVSAMALLSVGAEQAQAVATQEHSPRPAEEPMEQEPAL) is the Nuclear export signal element. The disordered stretch occupies residues 1088–1113 (EQAQAVATQEHSPRPAEEPMEQEPAL). Phosphoserine is present on Ser1099.

It belongs to the histone deacetylase family. HD type 2 subfamily. In terms of assembly, interacts with AHRR, BAHD1, BCOR, HDAC7, HDAC9, CTBP1, MEF2C, NCOR2, NRIP1, PHB2 and a 14-3-3 chaperone protein. Interacts with BCL6, DDIT3/CHOP, GRK5, KDM5B and MYOCD. Interacts with EP300 in the presence of TFAP2C. Interacts with ANKRA2. Interacts with CUL7 (as part of the 3M complex); negatively regulated by ANKRA2. Interacts with ZBTB7B; the interaction allows the recruitment of HDAC4 on CD8 loci for deacetylation and possible inhibition of CD8 genes expression. Interacts with RARA. Post-translationally, phosphorylated by AMPK, CaMK1, SIK1 and PRKD1 at Ser-250 and Ser-488. The phosphorylation is required for the export to the cytoplasm and inhibition. Phosphorylated by the PKC kinases PKN1 and PKN2, impairing nuclear import. Phosphorylated by GRK5, leading to nuclear export of HDAC5 and allowing MEF2-mediated transcription. In terms of processing, ubiquitinated. Polyubiquitination however does not lead to its degradation.

The protein localises to the nucleus. Its subcellular location is the cytoplasm. The catalysed reaction is N(6)-acetyl-L-lysyl-[histone] + H2O = L-lysyl-[histone] + acetate. Responsible for the deacetylation of lysine residues on the N-terminal part of the core histones (H2A, H2B, H3 and H4). Histone deacetylation gives a tag for epigenetic repression and plays an important role in transcriptional regulation, cell cycle progression and developmental events. Histone deacetylases act via the formation of large multiprotein complexes. Involved in muscle maturation by repressing transcription of myocyte enhancer MEF2C. During muscle differentiation, it shuttles into the cytoplasm, allowing the expression of myocyte enhancer factors. Serves as a corepressor of RARA and causes its deacetylation. In association with RARA, plays a role in the repression of microRNA-10a and thereby in the inflammatory response. The chain is Histone deacetylase 5 (Hdac5) from Mus musculus (Mouse).